Here is a 615-residue protein sequence, read N- to C-terminus: TORTIFOLIA1-like protein 3 (615 aa).

5 HEAT repeats span residues 44-81, 86-123, 125-163, 168-205, and 213-250; these read GNLQSFISVILSVDTGDKPAVRKHCIHLLAVLSVSLPL, PFLSKILTRITRRLRDPDSSIRSTCVAAVSAISSRTTK, PFYSAFMKPLADTLFTEQEVNAQIGAALCLAAAIDSASD, RLGQTLLPRLEKLVKCNAFKAKSAGVVVIGSVIGAGGL, and GGLKGLVDCLLSFLVSEDWAARKAAAEALGRLATMERN. Residues 288–446 form a disordered region; that stretch reads VPDLSEEVSP…HHVLSENPNS (159 aa). The span at 318-347 shows a compositional bias: polar residues; it reads RVGSTPAKSRTHLVNRSTPPGSSLATTARK. The span at 391–406 shows a compositional bias: basic and acidic residues; it reads DEQHCDHDENAKETSH. Positions 407-426 are enriched in polar residues; sequence SSHNTVQKLGGVSSSLNGNI. Residue S456 is modified to Phosphoserine.

This Arabidopsis thaliana (Mouse-ear cress) protein is TORTIFOLIA1-like protein 3.